The sequence spans 162 residues: Ribonuclease P protein component (162 aa).

The segment at 1 to 67 (MDEKDLAAQP…GGKLVSLKGD (67 aa)) is disordered. Basic and acidic residues predominate over residues 21-31 (GPHEDPRRQEG).

This sequence belongs to the RnpA family. Consists of a catalytic RNA component (M1 or rnpB) and a protein subunit.

It carries out the reaction Endonucleolytic cleavage of RNA, removing 5'-extranucleotides from tRNA precursor.. In terms of biological role, RNaseP catalyzes the removal of the 5'-leader sequence from pre-tRNA to produce the mature 5'-terminus. It can also cleave other RNA substrates such as 4.5S RNA. The protein component plays an auxiliary but essential role in vivo by binding to the 5'-leader sequence and broadening the substrate specificity of the ribozyme. The sequence is that of Ribonuclease P protein component from Thermus brockianus.